The sequence spans 2193 residues: Genome polyprotein (2193 aa).

The disordered stretch occupies residues 1–22 (MGSQVSTQRSGSHENSNSATEG). G2 carries the N-myristoyl glycine; by host lipid modification. Over 2 to 1503 (GSQVSTQRSG…HLNRAVLVMQ (1502 aa)) the chain is Cytoplasmic. 2 amphipathic alpha-helix regions span residues 566-588 (GDRV…LTPA) and 568-588 (RVAD…LTPA). Catalysis depends on for protease 2A activity residues H883 and D901. Positions 918 and 920 each coordinate Zn(2+). The active-site For protease 2A activity is C972. Residues C978 and H980 each contribute to the Zn(2+) site. Positions 1112–1184 (SASWLKKFND…EQSAASQEDL (73 aa)) are membrane-binding. Positions 1112 to 1250 (SASWLKKFND…SPGTGKSLAT (139 aa)) are oligomerization. The segment at 1133-1137 (FNKIS) is RNA-binding. The region spanning 1216–1374 (EKRMNNYMQF…YKTDLGRLDA (159 aa)) is the SF3 helicase domain. 1240 to 1247 (GSPGTGKS) contacts ATP. Zn(2+)-binding residues include C1381, C1392, and C1397. The C4-type; degenerate zinc-finger motif lies at 1381 to 1397 (CTENNTANFKRCSPLVC). The RNA-binding stretch occupies residues 1424 to 1431 (EYNNRSAI). Positions 1435-1440 (IEALFQ) are oligomerization. Residues 1504 to 1519 (SIATVVAVVSLVYVIY) lie within the membrane without spanning it. Over 1520 to 2193 (KLFAGFQGAY…NLRRNWLELF (674 aa)) the chain is Cytoplasmic. The residue at position 1529 (Y1529) is an O-(5'-phospho-RNA)-tyrosine. In terms of domain architecture, Peptidase C3 spans 1549 to 1727 (GPSLDFALSL…FCAGLKRSYF (179 aa)). Catalysis depends on for protease 3C activity residues H1588, E1619, and C1695. The RdRp catalytic domain occupies 1958-2073 (GSLFAFDYSG…ASYPFPIDCL (116 aa)). Mg(2+)-binding residues include D1964 and D2060.

The protein belongs to the picornaviruses polyprotein family. In terms of assembly, interacts with capsid protein VP1 and capsid protein VP3 to form heterotrimeric protomers. As to quaternary structure, interacts with capsid protein VP0, and capsid protein VP3 to form heterotrimeric protomers. Five protomers subsequently associate to form pentamers which serve as building blocks for the capsid. Interacts with capsid protein VP2, capsid protein VP3 and capsid protein VP4 following cleavage of capsid protein VP0. Interacts with host SCARB2. Interacts with host ARF6; this interaction mediates viral endocytosis. Interacts with capsid protein VP1 and capsid protein VP3 in the mature capsid. Interacts with host SCARB2. In terms of assembly, interacts with capsid protein VP0 and capsid protein VP1 to form heterotrimeric protomers. Five protomers subsequently associate to form pentamers which serve as building blocks for the capsid. Interacts with capsid protein VP4 in the mature capsid. Interacts with protein 2C; this interaction may be important for virion morphogenesis. As to quaternary structure, interacts with capsid protein VP1 and capsid protein VP3. Homodimer. Interacts with host SPOP; this interaction promotes protease 2A ubiquitination and subsequent degradation. In terms of assembly, interacts with host BAX; this interaction activates the mitochondrial apoptotic pathway. Interacts with host ILF2. As to quaternary structure, homohexamer; forms a hexameric ring structure with 6-fold symmetry characteristic of AAA+ ATPases. Interacts (via N-terminus) with host RTN3 (via reticulon domain); this interaction is important for viral replication. Interacts with capsid protein VP3; this interaction may be important for virion morphogenesis. Interacts with protein 3CD. In terms of assembly, homodimer. Interacts with host GBF1. Interacts (via GOLD domain) with host ACBD3 (via GOLD domain); this interaction allows the formation of a viral protein 3A/ACBD3 heterotetramer with a 2:2 stoichiometry, which will stimulate the recruitment of host PI4KB in order to synthesize PI4P at the viral RNA replication sites. As to quaternary structure, interacts with RNA-directed RNA polymerase. Interacts with host IFIH1/MDA5; this interaction inhibits host IFIH1. Interacts with host RIGI. In terms of assembly, interacts with protein 3AB and with RNA-directed RNA polymerase. Interacts with host PPP1R15A. As to quaternary structure, interacts with Viral protein genome-linked and with protein 3CD. Interacts with host NLRP3. It depends on Mg(2+) as a cofactor. In terms of processing, specific enzymatic cleavages in vivo by the viral proteases yield processing intermediates and the mature proteins. Post-translationally, myristoylation is required for the formation of pentamers during virus assembly. Further assembly of 12 pentamers and a molecule of genomic RNA generates the provirion. During virion maturation, immature virions are rendered infectious following cleavage of VP0 into VP4 and VP2. This maturation seems to be an autocatalytic event triggered by the presence of RNA in the capsid and it is followed by a conformational change infectious virion. In terms of processing, myristoylation is required during RNA encapsidation and formation of the mature virus particle. Post-translationally, VPg is uridylylated by the polymerase into VPg-pUpU. This acts as a nucleotide-peptide primer for the genomic RNA replication.

Its subcellular location is the virion. The protein resides in the host cytoplasm. The protein localises to the host cytoplasmic vesicle membrane. It localises to the host nucleus. It catalyses the reaction a ribonucleoside 5'-triphosphate + H2O = a ribonucleoside 5'-diphosphate + phosphate + H(+). The catalysed reaction is Selective cleavage of Tyr-|-Gly bond in the picornavirus polyprotein.. It carries out the reaction RNA(n) + a ribonucleoside 5'-triphosphate = RNA(n+1) + diphosphate. The enzyme catalyses Selective cleavage of Gln-|-Gly bond in the poliovirus polyprotein. In other picornavirus reactions Glu may be substituted for Gln, and Ser or Thr for Gly.. Replication or transcription is subject to high level of random mutations by the nucleotide analog ribavirin. In terms of biological role, forms an icosahedral capsid of pseudo T=3 symmetry with capsid proteins VP2 and VP3. The capsid is 300 Angstroms in diameter, composed of 60 copies of each capsid protein and enclosing the viral positive strand RNA genome. Capsid protein VP1 mainly forms the vertices of the capsid. Capsid protein VP1, together with VP2, interacts with host cell receptor SCARB2 to provide virion attachment to target host cells. This attachment induces virion internalization predominantly through clathrin-dependent endocytosis. After binding to its receptor, the capsid undergoes conformational changes. Capsid protein VP1 N-terminus (that contains an amphipathic alpha-helix) and capsid protein VP4 are externalized. Together, they shape a pore in the host membrane through which viral genome is translocated to host cell cytoplasm. Functionally, forms an icosahedral capsid of pseudo T=3 symmetry with capsid proteins VP2 and VP3. The capsid is 300 Angstroms in diameter, composed of 60 copies of each capsid protein and enclosing the viral positive strand RNA genome. Capsid protein VP2, together with VP1, interacts with host cell receptor SCARB2 to provide virion attachment to target host cells. Forms an icosahedral capsid of pseudo T=3 symmetry with capsid proteins VP2 and VP3. The capsid is 300 Angstroms in diameter, composed of 60 copies of each capsid protein and enclosing the viral positive strand RNA genome. Its function is as follows. Lies on the inner surface of the capsid shell. After binding to the host receptor, the capsid undergoes conformational changes. Capsid protein VP4 is released, Capsid protein VP1 N-terminus is externalized, and together, they shape a pore in the host membrane through which the viral genome is translocated into the host cell cytoplasm. In terms of biological role, component of immature procapsids, which is cleaved into capsid proteins VP4 and VP2 after maturation. Allows the capsid to remain inactive before the maturation step. Functionally, cysteine protease that cleaves viral polyprotein and specific host proteins. It is responsible for the autocatalytic cleavage between the P1 and P2 regions, which is the first cleavage occurring in the polyprotein. Also cleaves the host translation initiation factor EIF4G1, in order to shut down the capped cellular mRNA translation. Inhibits the host nucleus-cytoplasm protein and RNA trafficking by cleaving host members of the nuclear pores. Counteracts stress granule formation probably by antagonizing its assembly or promoting its dissassembly. Cleaves and inhibits host IFIH1/MDA5, thereby inhibiting the type-I IFN production and the establishment of the antiviral state. Cleaves and inhibits host MAVS, thereby inhibiting the type-I IFN production and the establishment of the antiviral state. Plays an essential role in the virus replication cycle by acting as a viroporin. Creates a pore in the host endoplasmic reticulum and as a consequence releases Ca2+ in the cytoplasm of infected cell. In turn, high levels of cytoplasmic calcium may trigger membrane trafficking and transport of viral ER-associated proteins to viroplasms, sites of viral genome replication. Also activates the mitochondrial apoptotic pathway by activating host BAX. Its function is as follows. Induces and associates with structural rearrangements of intracellular membranes. Displays RNA-binding, nucleotide binding and NTPase activities. May play a role in virion morphogenesis and viral RNA encapsidation by interacting with the capsid protein VP3. In terms of biological role, localizes the viral replication complex to the surface of membranous vesicles. Together with protein 3CD binds the Cis-Active RNA Element (CRE) which is involved in RNA synthesis initiation. Acts as a cofactor to stimulate the activity of 3D polymerase, maybe through a nucleid acid chaperone activity. Functionally, localizes the viral replication complex to the surface of membranous vesicles. It inhibits host cell endoplasmic reticulum-to-Golgi apparatus transport and causes the disassembly of the Golgi complex, possibly through GBF1 interaction. This would result in depletion of MHC, trail receptors and IFN receptors at the host cell surface. Plays an essential role in viral RNA replication by recruiting ACBD3 and PI4KB at the viral replication sites, thereby allowing the formation of the rearranged membranous structures where viral replication takes place. Acts as a primer for viral RNA replication and remains covalently bound to viral genomic RNA. VPg is uridylylated prior to priming replication into VPg-pUpU. The oriI viral genomic sequence may act as a template for this. The VPg-pUpU is then used as primer on the genomic RNA poly(A) by the RNA-dependent RNA polymerase to replicate the viral genome. During genome replication, the VPg-RNA linkage is removed by the host TDP2, thereby accelerating replication. During the late stage of the replication cycle, host TDP2 is excluded from sites of viral RNA synthesis and encapsidation, allowing for the generation of progeny virions. Its function is as follows. Involved in the viral replication complex and viral polypeptide maturation. It exhibits protease activity with a specificity and catalytic efficiency that is different from protease 3C. Protein 3CD lacks polymerase activity. Protein 3CD binds to the 5'UTR of the viral genome. Regulates host protein expression by interacting with host PPP1R15A to support viral replication. In terms of biological role, major viral protease that mediates proteolytic processing of the polyprotein. Cleaves host EIF5B, contributing to host translation shutoff. Also cleaves host PABPC1, contributing to host translation shutoff. Disassembles host cytoplasmic stress granules by cleaving host G3BP1, although this effect is less prononced than the inhibition induced by protease 2A. Cleaves host RIGI and thus contributes to the inhibition of type I interferon production. Cleaves host IRF7 and thus contributes to the inhibition of type I interferon production. Cleaves host HNRNPA1 thereby increasing the translation of apoptosis protease activating factor APAF1, leading to apoptosis of the host cell. Cleaves host NLRP1, triggers host N-glycine-mediated degradation of the autoinhibitory NLRP1 N-terminal fragment. Cleaves and inactivates host GSDMD, preventing GSDMD-mediated pyroptosis. Also promotes apoptosis in infected cell through cleaving of host PINX1, a telomere binding protein in order to facilitate viral release. Impairs host PML-NBs production via PML cleavage and counter its antiviral activities. Functionally, replicates the viral genomic RNA on the surface of intracellular membranes. May form linear arrays of subunits that propagate along a strong head-to-tail interaction called interface-I. Covalently attaches UMP to a tyrosine of VPg, which is used to prime RNA synthesis. The positive stranded RNA genome is first replicated at virus induced membranous vesicles, creating a dsRNA genomic replication form. This dsRNA is then used as template to synthesize positive stranded RNA genomes. ss(+)RNA genomes are either translated, replicated or encapsidated. Facilitates the assembly of NLRP3 inflammasome complex and stimulates the cleavage of host pro-CASP1 and the secretion of IL-1beta. The chain is Genome polyprotein from Human enterovirus 71 (strain USA/BrCr/1970) (EV71).